The sequence spans 313 residues: MAAPMNGQVCVVTGASRGIGRGIALQLCKAGATVYITGRHLDTLRVVAQEAQSLGGQCVPVVCDSSQESEVRSLFEQVDREQQGRLDVLVNNAYAGVQTILNTRNKAFWETPASMWDDINNVGLRGHYFCSVYGARLMVPAGQGLIVVISSPGSLQYMFNVPYGVGKAACDKLAADCAHELRRHGVSCVSLWPGIVQTELLKEHMAKEEVLQDPVLKQFKSAFSSAETTELSGKCVVALATDPNILSLSGKVLPSCDLARRYGLRDVDGRPVQDYLSLSSVLSHVSGLGWLASYLPSFLRVPKWIIALYTSKF.

An N-acetylalanine modification is found at Ala-2. Ile-19 is a binding site for NAD(+). An Omega-N-methylarginine modification is found at Arg-21. Asp-64 is an NAD(+) binding site. Ser-151 serves as a coordination point for substrate. Tyr-163, Lys-167, and Thr-198 together coordinate NAD(+). The active-site Proton acceptor is the Tyr-163. Residues 235–313 (CVVALATDPN…WIIALYTSKF (79 aa)) form a required for ER localization region.

Belongs to the short-chain dehydrogenases/reductases (SDR) family. Detected in heart, liver, adrenal glands, and at low levels in skeletal muscle, kidney, pancreas and brain.

The protein localises to the endoplasmic reticulum. It carries out the reaction 17alpha-estradiol + NADP(+) = estrone + NADPH + H(+). It catalyses the reaction testosterone + NADP(+) = androst-4-ene-3,17-dione + NADPH + H(+). The enzyme catalyses prostaglandin E1 + NADPH + H(+) = prostaglandin F1 + NADP(+). The catalysed reaction is isatin + NADPH + H(+) = 3-hydroxyindolin-2-one + NADP(+). In terms of biological role, NADPH-dependent oxidoreductase which catalyzes the reduction of steroids (estrone, androstene-3,17-dione and cortisone) as well as prostaglandin E1, isatin and xenobiotics in vitro. May have a role in steroid and/or xenobiotic metabolism. This chain is Dehydrogenase/reductase SDR family member 1, found in Homo sapiens (Human).